The following is a 334-amino-acid chain: HTH-type transcriptional repressor PurR (334 aa).

The 55-residue stretch at A2–V56 folds into the HTH lacI-type domain. Residues I4–N23 constitute a DNA-binding region (H-T-H motif). A DNA-binding region spans residues S48–V56. Residues Y73, K189, T191, F220, and D274 each coordinate hypoxanthine.

As to quaternary structure, homodimer.

Its pathway is purine metabolism; purine nucleotide biosynthesis [regulation]. In terms of biological role, is the main repressor of the genes involved in the de novo synthesis of purine nucleotides, regulating purB, purC, purEK, purF, purHD, purL, purMN and guaBA expression. PurR is allosterically activated to bind its cognate DNA by binding the purine corepressors, hypoxanthine or guanine, thereby effecting transcription repression. The chain is HTH-type transcriptional repressor PurR from Mannheimia succiniciproducens (strain KCTC 0769BP / MBEL55E).